The following is a 1110-amino-acid chain: Retinal guanylyl cyclase 1 (1110 aa).

An N-terminal signal peptide occupies residues 1 to 56 (MTACTFLAGGLRDPGLCGPTRWAPSPPGLPPIPPRPRLRLRPPLLLLLLLPRSVLS). Topologically, residues 57 to 467 (AVFTVGVLGP…PDTICNGGVE (411 aa)) are extracellular. An N-linked (GlcNAc...) asparagine glycan is attached at asparagine 302. The helical transmembrane segment at 468-492 (PSVVFIGFLLVVGMGLAGAFLAHYC) threads the bilayer. One can recognise a Protein kinase domain in the interval 493–813 (RHRLLHIQMV…DRTFELFKSI (321 aa)). At 493–1110 (RHRLLHIQMV…KARPGQFSGK (618 aa)) the chain is on the cytoplasmic side. A Guanylate cyclase domain is found at 885–1015 (TLYFSDIVGF…DTVNTASAME (131 aa)). A disordered region spans residues 1070–1110 (PIPKPPDLQPGASNHGISLHEIPPDRRQKLEKARPGQFSGK). Residues 1091–1103 (IPPDRRQKLEKAR) show a composition bias toward basic and acidic residues.

This sequence belongs to the adenylyl cyclase class-4/guanylyl cyclase family. Homodimer; requires homodimerization for guanylyl cyclase activity. Interacts (via C-terminus) with RD3 (via C-terminus); promotes the exit of GUCY2D from the endoplasmic reticulum and its trafficking to the photoreceptor outer segments. Interaction with RD3 negatively regulates GUCY2D guanylate cyclase activity. In terms of tissue distribution, expressed in the retina in rod outer segment.

It localises to the photoreceptor outer segment membrane. It is found in the endoplasmic reticulum membrane. It carries out the reaction GTP = 3',5'-cyclic GMP + diphosphate. With respect to regulation, activated by GUCA1A when free calcium ions concentration is low, and inhibited by GUCA1A when free calcium ions concentration is high. Negatively regulated by RD3; inhibits the basal and GUCA1A-stimulated guanylate cyclase activity. Catalyzes the synthesis of cyclic GMP (cGMP) in rods and cones of photoreceptors. Plays an essential role in phototransduction, by mediating cGMP replenishment. May also participate in the trafficking of membrane-asociated proteins to the photoreceptor outer segment membrane. The protein is Retinal guanylyl cyclase 1 (GUCY2D) of Bos taurus (Bovine).